Reading from the N-terminus, the 90-residue chain is Small ribosomal subunit protein uS15 (90 aa).

This sequence belongs to the universal ribosomal protein uS15 family. Part of the 30S ribosomal subunit. Forms a bridge to the 50S subunit in the 70S ribosome, contacting the 23S rRNA.

One of the primary rRNA binding proteins, it binds directly to 16S rRNA where it helps nucleate assembly of the platform of the 30S subunit by binding and bridging several RNA helices of the 16S rRNA. Its function is as follows. Forms an intersubunit bridge (bridge B4) with the 23S rRNA of the 50S subunit in the ribosome. The protein is Small ribosomal subunit protein uS15 of Mycoplasmoides gallisepticum (strain R(low / passage 15 / clone 2)) (Mycoplasma gallisepticum).